The chain runs to 173 residues: Large ribosomal subunit protein uL16 (173 aa).

It belongs to the universal ribosomal protein uL16 family.

This Methanococcus aeolicus (strain ATCC BAA-1280 / DSM 17508 / OCM 812 / Nankai-3) protein is Large ribosomal subunit protein uL16.